The primary structure comprises 441 residues: Tol-Pal system protein TolB (441 aa).

An N-terminal signal peptide occupies residues 1–39 (MPAMTPAFRRADLTGFLRTYGAALILLLAAMLAWQPAQA).

It belongs to the TolB family. As to quaternary structure, the Tol-Pal system is composed of five core proteins: the inner membrane proteins TolA, TolQ and TolR, the periplasmic protein TolB and the outer membrane protein Pal. They form a network linking the inner and outer membranes and the peptidoglycan layer.

It is found in the periplasm. Part of the Tol-Pal system, which plays a role in outer membrane invagination during cell division and is important for maintaining outer membrane integrity. The chain is Tol-Pal system protein TolB from Bordetella bronchiseptica (strain ATCC BAA-588 / NCTC 13252 / RB50) (Alcaligenes bronchisepticus).